The primary structure comprises 59 residues: Potassium channel toxin alpha-KTx 15.4 (59 aa).

A signal peptide spans 1–22; sequence MKFSSIILLTLLICSMSIFGNC. The residue at position 23 (Gln-23) is a Pyrrolidone carboxylic acid. 3 disulfides stabilise this stretch: Cys-30–Cys-50, Cys-35–Cys-55, and Cys-39–Cys-57.

Expressed by the venom gland.

The protein localises to the secreted. Functionally, blocker of A-type voltage-gated potassium channels of cerebellar granular cells. May also inhibit Kv4/KCND when coexpressed with DPP6 or DPP10. The occlusion of the outer entry of the K(+) conducting pore is partially reversible and affects both open and closed channels. It shares the same target in rat brain than BmTX3 (AC Q8I0L5) and AmmTX3 (AC P60208). This chain is Potassium channel toxin alpha-KTx 15.4, found in Androctonus australis (Sahara scorpion).